Reading from the N-terminus, the 420-residue chain is Glucose-1-phosphate adenylyltransferase (420 aa).

Residues Y107, G172, 187–188, and S205 each bind alpha-D-glucose 1-phosphate; that span reads EK.

It belongs to the bacterial/plant glucose-1-phosphate adenylyltransferase family. As to quaternary structure, homotetramer.

It carries out the reaction alpha-D-glucose 1-phosphate + ATP + H(+) = ADP-alpha-D-glucose + diphosphate. Its pathway is glycan biosynthesis; glycogen biosynthesis. In terms of biological role, involved in the biosynthesis of ADP-glucose, a building block required for the elongation reactions to produce glycogen. Catalyzes the reaction between ATP and alpha-D-glucose 1-phosphate (G1P) to produce pyrophosphate and ADP-Glc. This Rhodopseudomonas palustris (strain TIE-1) protein is Glucose-1-phosphate adenylyltransferase.